A 242-amino-acid polypeptide reads, in one-letter code: MRHVAVIIPARYGASRFPGKPLADLAGKPLIAHVVERAQRARGVDVVAVATDDDRIARAARDAGGQAILTGPAATGTDRVAEAARKLAPRPEIVVNLQGDEPLIEPEAIEAVIGAMEAGVRMATLARPLAAGELERTQVVKVVTRASGDALYFSRAPIPHRRAGGESPLARAHVGIYAFTAAFLETFTALAPGRLEGEEALEQLRALEHGYDIRVADTGYRGFGIDTPDDLERARALLAAGA.

It belongs to the KdsB family.

The protein resides in the cytoplasm. The enzyme catalyses 3-deoxy-alpha-D-manno-oct-2-ulosonate + CTP = CMP-3-deoxy-beta-D-manno-octulosonate + diphosphate. Its pathway is nucleotide-sugar biosynthesis; CMP-3-deoxy-D-manno-octulosonate biosynthesis; CMP-3-deoxy-D-manno-octulosonate from 3-deoxy-D-manno-octulosonate and CTP: step 1/1. It participates in bacterial outer membrane biogenesis; lipopolysaccharide biosynthesis. Functionally, activates KDO (a required 8-carbon sugar) for incorporation into bacterial lipopolysaccharide in Gram-negative bacteria. This is 3-deoxy-manno-octulosonate cytidylyltransferase from Anaeromyxobacter dehalogenans (strain 2CP-1 / ATCC BAA-258).